The chain runs to 247 residues: Carboxy-S-adenosyl-L-methionine synthase (247 aa).

S-adenosyl-L-methionine is bound by residues Tyr39, Gly64–Ser66, Asp89–Asn90, Asp117–Ile118, Asn132, and Arg199.

The protein belongs to the class I-like SAM-binding methyltransferase superfamily. Cx-SAM synthase family. In terms of assembly, homodimer.

The enzyme catalyses prephenate + S-adenosyl-L-methionine = carboxy-S-adenosyl-L-methionine + 3-phenylpyruvate + H2O. In terms of biological role, catalyzes the conversion of S-adenosyl-L-methionine (SAM) to carboxy-S-adenosyl-L-methionine (Cx-SAM). The sequence is that of Carboxy-S-adenosyl-L-methionine synthase from Salmonella arizonae (strain ATCC BAA-731 / CDC346-86 / RSK2980).